We begin with the raw amino-acid sequence, 188 residues long: Photosystem I assembly protein Ycf4 (188 aa).

2 helical membrane passes run 28–48 (WATV…SSYL) and 68–88 (IAIG…WATI).

It belongs to the Ycf4 family.

The protein resides in the cellular thylakoid membrane. Functionally, seems to be required for the assembly of the photosystem I complex. This chain is Photosystem I assembly protein Ycf4, found in Cyanothece sp. (strain PCC 7425 / ATCC 29141).